A 484-amino-acid chain; its full sequence is Glycogen synthase (484 aa).

K15 contributes to the ADP-alpha-D-glucose binding site.

This sequence belongs to the glycosyltransferase 1 family. Bacterial/plant glycogen synthase subfamily.

It catalyses the reaction [(1-&gt;4)-alpha-D-glucosyl](n) + ADP-alpha-D-glucose = [(1-&gt;4)-alpha-D-glucosyl](n+1) + ADP + H(+). It functions in the pathway glycan biosynthesis; glycogen biosynthesis. Its function is as follows. Synthesizes alpha-1,4-glucan chains using ADP-glucose. The chain is Glycogen synthase from Bacillus licheniformis (strain ATCC 14580 / DSM 13 / JCM 2505 / CCUG 7422 / NBRC 12200 / NCIMB 9375 / NCTC 10341 / NRRL NRS-1264 / Gibson 46).